A 335-amino-acid polypeptide reads, in one-letter code: Spliceosome-associated protein 49 (335 aa).

RRM domains are found at residues 13–84 (IYLG…PIRV) and 101–172 (LFVG…PITV). Positions 204–223 (VTPQSTLPPGFSPATPAPTS) are disordered.

It belongs to the SF3B4 family.

The protein localises to the nucleus. This chain is Spliceosome-associated protein 49 (sap49), found in Schizosaccharomyces pombe (strain 972 / ATCC 24843) (Fission yeast).